The sequence spans 370 residues: DNA replication and repair protein RecF (370 aa).

Gly-30 to Thr-37 provides a ligand contact to ATP.

Belongs to the RecF family.

It localises to the cytoplasm. Functionally, the RecF protein is involved in DNA metabolism; it is required for DNA replication and normal SOS inducibility. RecF binds preferentially to single-stranded, linear DNA. It also seems to bind ATP. In Stutzerimonas stutzeri (strain A1501) (Pseudomonas stutzeri), this protein is DNA replication and repair protein RecF.